The following is a 400-amino-acid chain: AA13 family lytic polysaccharide monooxygenase A (400 aa).

An N-terminal signal peptide occupies residues 1–17 (MLLTVLAVVGCFTAVNG). His-18 lines the Cu(2+) pocket. His-18 carries the methylhistidine modification. Residues 18–247 (HGYLTIPASR…AQVYLHCADI (230 aa)) enclose the Chitin-binding type-4 domain. 7 cysteine pairs are disulfide-bonded: Cys-39–Cys-42, Cys-65–Cys-244, Cys-101–Cys-202, Cys-117–Cys-144, Cys-152–Cys-160, Cys-166–Cys-172, and Cys-180–Cys-191. His-108 contacts Cu(2+). The N-linked (GlcNAc...) asparagine glycan is linked to Asn-119. Tyr-241 serves as a coordination point for Cu(2+). The interval 254-287 (GGTTSKSTTSTTSTTSTSRSTSTSAPTTTSSAST) is disordered. The span at 257–287 (TSKSTTSTTSTTSTSRSTSTSAPTTTSSAST) shows a compositional bias: low complexity. Residues 293-400 (TTQASLIPVT…TTATAAASWR (108 aa)) form the CBM20 domain. N-linked (GlcNAc...) asparagine glycosylation occurs at Asn-379.

The protein belongs to the polysaccharide monooxygenase AA13 family. The cofactor is Cu(2+). Post-translationally, O-mannosylated.

The protein localises to the secreted. It carries out the reaction starch + reduced acceptor + O2 = D-glucono-1,5-lactone-terminated malto-oligosaccharides + short-chain malto-oligosaccharides + acceptor + H2O.. Activity is inhibited by both beta-cyclodextrin or amylose that block the access to the active site. Its function is as follows. Starch-active lytic polysaccharide monooxygenase that oxidizes the C1 position of starch substrates. Catalysis by LPMOs requires the reduction of the active-site copper from Cu(II) to Cu(I) by a reducing agent and H(2)O(2) or O(2) as a cosubstrate. In Aspergillus terreus (strain NIH 2624 / FGSC A1156), this protein is AA13 family lytic polysaccharide monooxygenase A.